Here is a 153-residue protein sequence, read N- to C-terminus: Pheromone-binding protein Gp-9 (153 aa).

Positions 1–19 are cleaved as a signal peptide; sequence MKTFVLHIFIFALVAFASA. Disulfide bonds link C37/C77, C73/C129, and C118/C138.

Belongs to the PBP/GOBP family. As to quaternary structure, homodimer.

The protein localises to the secreted. Its function is as follows. Colony queen number, a major feature of social organization, is associated with worker genotype for Gp-9. Colonies are headed by either a single reproductive queen (monogyne form) or multiple queens (polygyne form). Differences in worker Gp-9 genotypes between social forms may cause differences in workers' abilities to recognize queens and regulate their numbers. This chain is Pheromone-binding protein Gp-9, found in Solenopsis richteri (Black imported fire ant).